The sequence spans 61 residues: Early 3 Conserved Region 1-alpha protein (61 aa).

At 1 to 14 (MSNSSNSTSLSNFS) the chain is on the lumenal side. Residues asparagine 3, asparagine 6, and asparagine 12 are each glycosylated (N-linked (GlcNAc...) asparagine; by host). A helical transmembrane segment spans residues 15 to 35 (GIGVGVILTLVILFILILALL). Residues 36–61 (CLRVAACCTHVCTYCQLFKRWGQHPR) are Cytoplasmic-facing.

The protein belongs to the adenoviridae E3-CR1 family. Interacts with E3 RID alpha and E3 RID beta. Only 1 of 3 three potential glycosylation sites is glycosylated. Oligosaccharides are not processed from high mannose to the complex type because the protein is retained in the endoplasmic reticulum.

The protein resides in the host endoplasmic reticulum membrane. Its subcellular location is the host cell membrane. Its function is as follows. Prevents infected cell apoptosis induced by the host immune system. May act by down-regulating host TRAIL receptors. May act in complex with E3 RID alpha and beta. May play a role on cellular apoptosis regulation in the ER. The sequence is that of Early 3 Conserved Region 1-alpha protein from Human adenovirus C serotype 2 (HAdV-2).